The chain runs to 288 residues: Protease HtpX homolog (288 aa).

The next 2 helical transmembrane spans lie at 1-21 (MHTIKTVLLLGVLTGLFLLAG) and 23-43 (IIGGQTGMIIAFFFAMAMNFF). H130 is a Zn(2+) binding site. E131 is a catalytic residue. H134 is a binding site for Zn(2+). 2 helical membrane-spanning segments follow: residues 140–160 (ILISSIAATIGGAISMLAEMA) and 175–195 (IGGLIGSLLLFILAPIAAMII). E204 contributes to the Zn(2+) binding site.

Belongs to the peptidase M48B family. Zn(2+) serves as cofactor.

The protein resides in the cell inner membrane. In Persephonella marina (strain DSM 14350 / EX-H1), this protein is Protease HtpX homolog.